The chain runs to 933 residues: 2-oxoglutarate dehydrogenase E1 component (933 aa).

Belongs to the alpha-ketoglutarate dehydrogenase family. As to quaternary structure, homodimer. Part of the 2-oxoglutarate dehydrogenase (OGDH) complex composed of E1 (2-oxoglutarate dehydrogenase), E2 (dihydrolipoamide succinyltransferase) and E3 (dihydrolipoamide dehydrogenase); the complex contains multiple copies of the three enzymatic components (E1, E2 and E3). Thiamine diphosphate serves as cofactor.

The catalysed reaction is N(6)-[(R)-lipoyl]-L-lysyl-[protein] + 2-oxoglutarate + H(+) = N(6)-[(R)-S(8)-succinyldihydrolipoyl]-L-lysyl-[protein] + CO2. Functionally, E1 component of the 2-oxoglutarate dehydrogenase (OGDH) complex which catalyzes the decarboxylation of 2-oxoglutarate, the first step in the conversion of 2-oxoglutarate to succinyl-CoA and CO(2). The sequence is that of 2-oxoglutarate dehydrogenase E1 component (sucA) from Rickettsia typhi (strain ATCC VR-144 / Wilmington).